The sequence spans 186 residues: Nicotinamidase/pyrazinamidase (186 aa).

The active-site Proton acceptor is the Asp-8. Asp-49, His-51, His-57, and His-71 together coordinate Fe cation. Lys-96 is a catalytic residue. Residue Cys-138 is the Nucleophile of the active site.

This sequence belongs to the isochorismatase family. Monomer. It depends on Mn(2+) as a cofactor. Fe(2+) is required as a cofactor.

The catalysed reaction is nicotinamide + H2O = nicotinate + NH4(+). The enzyme catalyses pyrazinamide + H2O = pyrazine-2-carboxylate + NH4(+). Its pathway is cofactor biosynthesis; nicotinate biosynthesis; nicotinate from nicotinamide: step 1/1. Its activity is regulated as follows. Is inhibited by Cu(2+), Zn(2+) and Fe(3+). Functionally, catalyzes the deamidation of nicotinamide (NAM) into nicotinate. Likely functions in the cyclical salvage pathway for production of NAD from nicotinamide. Its function is as follows. Is involved in the activation of the first-line antituberculous drug pyrazinamide (PZA) by converting it into the active form, pyrazinoic acid. The chain is Nicotinamidase/pyrazinamidase from Mycobacterium tuberculosis (strain ATCC 25618 / H37Rv).